The sequence spans 381 residues: Flap endonuclease 1 (381 aa).

The N-domain stretch occupies residues 1–105; it reads MGIKNLATLI…YELDKRKVRR (105 aa). D34 lines the Mg(2+) pocket. DNA-binding residues include R47 and R71. Mg(2+) contacts are provided by D87, E156, E158, D177, and D179. The I-domain stretch occupies residues 120 to 251; the sequence is EIIKHERRLV…VNALKLIKEH (132 aa). Residue E156 participates in DNA binding. 2 residues coordinate DNA: G229 and D231. D231 is a Mg(2+) binding site. An interaction with PCNA region spans residues 339–347; sequence VQKRLDSFF. The disordered stretch occupies residues 360 to 381; it reads AAKKAKDAKKKAAAKGKIAKRR. Residues 365-381 are compositionally biased toward basic residues; that stretch reads KDAKKKAAAKGKIAKRR.

It belongs to the XPG/RAD2 endonuclease family. FEN1 subfamily. As to quaternary structure, interacts with PCNA. Three molecules of FEN1 bind to one PCNA trimer with each molecule binding to one PCNA monomer. PCNA stimulates the nuclease activity without altering cleavage specificity. Requires Mg(2+) as cofactor. In terms of processing, phosphorylated. Phosphorylation upon DNA damage induces relocalization to the nuclear plasma.

It localises to the nucleus. It is found in the nucleolus. The protein localises to the nucleoplasm. The protein resides in the mitochondrion. In terms of biological role, structure-specific nuclease with 5'-flap endonuclease and 5'-3' exonuclease activities involved in DNA replication and repair. During DNA replication, cleaves the 5'-overhanging flap structure that is generated by displacement synthesis when DNA polymerase encounters the 5'-end of a downstream Okazaki fragment. It enters the flap from the 5'-end and then tracks to cleave the flap base, leaving a nick for ligation. Also involved in the long patch base excision repair (LP-BER) pathway, by cleaving within the apurinic/apyrimidinic (AP) site-terminated flap. Acts as a genome stabilization factor that prevents flaps from equilibrating into structures that lead to duplications and deletions. Also possesses 5'-3' exonuclease activity on nicked or gapped double-stranded DNA, and exhibits RNase H activity. Also involved in replication and repair of rDNA and in repairing mitochondrial DNA. The sequence is that of Flap endonuclease 1 from Kluyveromyces lactis (strain ATCC 8585 / CBS 2359 / DSM 70799 / NBRC 1267 / NRRL Y-1140 / WM37) (Yeast).